Here is a 331-residue protein sequence, read N- to C-terminus: CMRF35-like molecule 9 (331 aa).

An N-terminal signal peptide occupies residues 1–18 (MRPLVLLWGCLVLPGYEA). In terms of domain architecture, Ig-like V-type spans 19-120 (LKGPKEISGF…LGRDESFEVT (102 aa)). The Extracellular segment spans residues 19–204 (LKGPKEISGF…KPSVSIPMVR (186 aa)). Cys37 and Cys106 are oxidised to a cystine. O-linked (GalNAc...) threonine glycosylation occurs at Thr136. Ser140 is a glycosylation site (O-linked (GalNAc...) serine). O-linked (GalNAc...) threonine glycosylation is present at Thr143. A glycan (O-linked (GalNAc...) serine) is linked at Ser145. O-linked (GalNAc...) threonine glycosylation is found at Thr150 and Thr152. O-linked (GalNAc...) serine glycosylation is present at Ser154. 3 O-linked (GalNAc...) threonine glycosylation sites follow: Thr164, Thr181, and Thr182. An O-linked (GalNAc...) serine glycan is attached at Ser186. A helical membrane pass occupies residues 205–225 (MMAPVLILLSLLLAAGLIAFG). At 226–331 (SHMLRWRKKA…ELAFSEFISV (106 aa)) the chain is on the cytoplasmic side. Over residues 278 to 293 (NPSAVPSPETQNLSQS) the composition is skewed to polar residues. Residues 278–318 (NPSAVPSPETQNLSQSTEEEEAARSLDDDKEDVMAPPPLQM) form a disordered region.

The protein belongs to the CD300 family. In terms of processing, O-glycosylated with sialylated oligosaccharides. As to expression, expressed in monocyte cell lines. Expressed in certain types of endothelial and myeloid lineage cells. Expressed in mesenteric lymph nodes (LNs), spleen, thymus, lung, heart and kidney. Expressed in high endothelial venules (HEVs) in peripheral and mesenteric LNs (at protein level). Highly expressed in heart. Slightly expressed in spleen and thymus. Isoform 5 is expressed preferentially in heart. Isoform 1 is expressed predominantly in kidney and liver.

The protein resides in the apical cell membrane. Its subcellular location is the basolateral cell membrane. It localises to the endosome. The protein localises to the multivesicular body membrane. Its function is as follows. Receptor which may mediate L-selectin-dependent lymphocyte rollings. Binds SELL in a calcium dependent manner. Binds lymphocyte. The protein is CMRF35-like molecule 9 (Cd300lg) of Mus musculus (Mouse).